A 1019-amino-acid chain; its full sequence is Photoactivated adenylate cyclase subunit alpha-like protein ST- (1019 aa).

Residues 55-148 (LRRLMYLSAS…GRMYGEWHMK (94 aa)) enclose the BLUF 1 domain. Positions 204-332 (VLTFIYLVEF…DCINTASRIT (129 aa)) constitute a Guanylate cyclase 1 domain. The region spanning 467–559 (LITLTYISQA…RVYGTPLDMT (93 aa)) is the BLUF 2 domain. The region spanning 615–744 (VMLATDICSF…EVSARVMAVE (130 aa)) is the Guanylate cyclase 2 domain. Disordered regions lie at residues 801–846 (EDHL…TRPH), 887–923 (QIAA…DQPA), and 963–993 (EGHR…NRAT). Over residues 821–834 (RHQRPGPGRPRRGH) the composition is skewed to basic residues.

This sequence belongs to the adenylyl cyclase class-4/guanylyl cyclase family. As to quaternary structure, heterotetramer of two alpha and two beta subunits.

It is found in the cell projection. Its subcellular location is the cilium. The protein localises to the flagellum. The chain is Photoactivated adenylate cyclase subunit alpha-like protein ST- from Euglena gracilis.